The chain runs to 49 residues: Large ribosomal subunit protein bL33C (49 aa).

A disordered region spans residues 20 to 49 (NKNKRNNPDRLEKQKYCPRERKVTLHRETK). Residues 25-49 (NNPDRLEKQKYCPRERKVTLHRETK) show a composition bias toward basic and acidic residues.

The protein belongs to the bacterial ribosomal protein bL33 family.

The sequence is that of Large ribosomal subunit protein bL33C (rpmG3) from Enterococcus faecalis (strain ATCC 700802 / V583).